A 251-amino-acid chain; its full sequence is 5'-nucleotidase SurE (251 aa).

Positions 8, 9, 39, and 95 each coordinate a divalent metal cation.

Belongs to the SurE nucleotidase family. The cofactor is a divalent metal cation.

It is found in the cytoplasm. The catalysed reaction is a ribonucleoside 5'-phosphate + H2O = a ribonucleoside + phosphate. In terms of biological role, nucleotidase that shows phosphatase activity on nucleoside 5'-monophosphates. The sequence is that of 5'-nucleotidase SurE from Ralstonia nicotianae (strain ATCC BAA-1114 / GMI1000) (Ralstonia solanacearum).